The primary structure comprises 416 residues: Homogentisate 1,2-dioxygenase (416 aa).

His275 functions as the Proton acceptor in the catalytic mechanism. The Fe cation site is built by His318 and Glu324. The homogentisate site is built by Tyr333 and His354. Position 354 (His354) interacts with Fe cation.

It belongs to the homogentisate dioxygenase family. Hexamer; dimer of trimers. Requires Fe cation as cofactor.

It catalyses the reaction homogentisate + O2 = 4-maleylacetoacetate + H(+). The protein operates within amino-acid degradation; L-phenylalanine degradation; acetoacetate and fumarate from L-phenylalanine: step 4/6. Its function is as follows. Involved in the catabolism of homogentisate (2,5-dihydroxyphenylacetate or 2,5-OH-PhAc), a central intermediate in the degradation of phenylalanine and tyrosine. Catalyzes the oxidative ring cleavage of the aromatic ring of homogentisate to yield maleylacetoacetate. The protein is Homogentisate 1,2-dioxygenase of Legionella pneumophila (strain Corby).